A 75-amino-acid polypeptide reads, in one-letter code: Guanine nucleotide-binding protein G(I)/G(S)/G(O) subunit gamma-3 (75 aa).

Residue threonine 5 is modified to Phosphothreonine. Serine 9 carries the post-translational modification Phosphoserine. At threonine 10 the chain carries Phosphothreonine. Phosphoserine is present on serine 12. Cysteine 72 bears the Cysteine methyl ester mark. Cysteine 72 carries S-geranylgeranyl cysteine lipidation. Positions 73–75 (ALL) are cleaved as a propeptide — removed in mature form.

It belongs to the G protein gamma family. As to quaternary structure, g proteins are composed of 3 units, alpha, beta and gamma. Forms a complex with GNAO1 and GNB1. Interacts with SCN8A. In terms of tissue distribution, abundantly expressed in brain. Low levels in testis.

It is found in the cell membrane. Guanine nucleotide-binding proteins (G proteins) are involved as a modulator or transducer in various transmembrane signaling systems. The beta and gamma chains are required for the GTPase activity, for replacement of GDP by GTP, and for G protein-effector interaction. The chain is Guanine nucleotide-binding protein G(I)/G(S)/G(O) subunit gamma-3 (GNG3) from Bos taurus (Bovine).